The primary structure comprises 1522 residues: Lysophospholipase nte1 (1522 aa).

A disordered region spans residues 1 to 24; the sequence is MADGVTQVDSTGLHSFSPSPSLSS. Residues 1 to 65 lie on the Cytoplasmic side of the membrane; that stretch reads MADGVTQVDS…LPPVPTTMAG (65 aa). The span at 15–24 shows a compositional bias: low complexity; that stretch reads SFSPSPSLSS. A helical transmembrane segment spans residues 66–86; that stretch reads WIGWVFSFFFQVIPSVLYWII. Residues 87-108 are Lumenal-facing; it reads TFSTITLPTWLFTLFSMSLTFT. A helical transmembrane segment spans residues 109–129; it reads MNFTTLLLIVLAVVSTISWFI. The Cytoplasmic segment spans residues 130 to 1522; that stretch reads RYRFLNMYSR…RTLAPRRASI (1393 aa). Disordered stretches follow at residues 308–384, 523–544, and 757–776; these read VPNS…SVHP, RAAT…GVSP, and TTTA…SRRR. Residues 369–381 are compositionally biased toward basic residues; that stretch reads ESRKHSSRKRRKS. A nucleoside 3',5'-cyclic phosphate contacts are provided by residues 680–800 and 840–960; these read GGTS…AVAS and RLTS…IAQR. The 165-residue stretch at 1219-1383 folds into the PNPLA domain; that stretch reads LVLGGGGARG…IDNLTVDHMK (165 aa). Residues 1223–1228 carry the GXGXXG motif; it reads GGGARG. Positions 1250 to 1254 match the GXSXG motif; sequence GTSIG. Catalysis depends on Ser1252, which acts as the Nucleophile. Residue Asp1370 is the Proton acceptor of the active site. A DGA/G motif is present at residues 1370 to 1372; it reads DGG. Residues 1501 to 1522 are disordered; the sequence is LPEETEEKKKLQRTLAPRRASI.

It belongs to the NTE family.

The protein localises to the endoplasmic reticulum membrane. The enzyme catalyses a 1-acyl-sn-glycero-3-phosphocholine + H2O = sn-glycerol 3-phosphocholine + a fatty acid + H(+). Inhibited by organophosphorus esters. Functionally, intracellular phospholipase B that catalyzes the double deacylation of phosphatidylcholine (PC) to glycerophosphocholine (GroPCho). Plays an important role in membrane lipid homeostasis. Responsible for the rapid PC turnover in response to inositol, elevated temperatures, or when choline is present in the growth medium. The polypeptide is Lysophospholipase nte1 (nte1) (Aspergillus fumigatus (strain ATCC MYA-4609 / CBS 101355 / FGSC A1100 / Af293) (Neosartorya fumigata)).